Here is a 103-residue protein sequence, read N- to C-terminus: Large ribosomal subunit protein bL21 (103 aa).

Belongs to the bacterial ribosomal protein bL21 family. As to quaternary structure, part of the 50S ribosomal subunit. Contacts protein L20.

Its function is as follows. This protein binds to 23S rRNA in the presence of protein L20. The protein is Large ribosomal subunit protein bL21 of Nitrosospira multiformis (strain ATCC 25196 / NCIMB 11849 / C 71).